A 307-amino-acid chain; its full sequence is MRNRTLADLERVVALGGGHGLGRVMSSLSSLGSRLTGIVTTTDNGGSTGRIRRSEGGIAWGDTRNCLNQLITEPSVASAMFEYRFTGNGELAGHNLGNLMLKALDHLSIRPIEAINLVRSLLKVDALLIPMSEQPVDLMAIDHEGHPIYGEVNIDQLAQMPQEMLLSPPVHATREAVEAINQADVILIGPGSFLTSLMPLLLLDELTQALRRSSASMIYIGNLGRELSPAAAALSLQDKLTIMESKIGRKIIDAVIVSPTIDISGVKDRIIVQQPLEAKDIPHRHDRELLRQALENTLQQLNGADSV.

The protein belongs to the gluconeogenesis factor family.

Its subcellular location is the cytoplasm. Its function is as follows. Required for morphogenesis under gluconeogenic growth conditions. The sequence is that of Putative gluconeogenesis factor from Yersinia pestis.